We begin with the raw amino-acid sequence, 286 residues long: 3-hydroxybutyryl-CoA dehydrogenase (286 aa).

The protein belongs to the 3-hydroxyacyl-CoA dehydrogenase family.

The catalysed reaction is 3-hydroxybutanoyl-CoA + NAD(+) = acetoacetyl-CoA + NADH + H(+). It carries out the reaction (3S)-3-hydroxybutanoyl-CoA + NADP(+) = acetoacetyl-CoA + NADPH + H(+). Its pathway is lipid metabolism; butanoate metabolism. The chain is 3-hydroxybutyryl-CoA dehydrogenase (fadB2) from Mycobacterium tuberculosis (strain CDC 1551 / Oshkosh).